The sequence spans 527 residues: Eukaryotic translation initiation factor 3 subunit D (527 aa).

Residues 100–136 (QQNKRGGSNAGGRGGRGGMRGGRFGSNNKYWNDRRQR) form a disordered region. Over residues 107 to 123 (SNAGGRGGRGGMRGGRF) the composition is skewed to gly residues. The segment at 264–277 (SEHLTVNENLTAHH) is RNA gate. The disordered stretch occupies residues 503–527 (DQIEEETQEEEEEEQSKGWVEESRE). The span at 504–516 (QIEEETQEEEEEE) shows a compositional bias: acidic residues. A compositionally biased stretch (basic and acidic residues) spans 517–527 (QSKGWVEESRE).

Belongs to the eIF-3 subunit D family. In terms of assembly, component of the eukaryotic translation initiation factor 3 (eIF-3) complex.

The protein localises to the cytoplasm. MRNA cap-binding component of the eukaryotic translation initiation factor 3 (eIF-3) complex, which is involved in protein synthesis of a specialized repertoire of mRNAs and, together with other initiation factors, stimulates binding of mRNA and methionyl-tRNAi to the 40S ribosome. The eIF-3 complex specifically targets and initiates translation of a subset of mRNAs involved in cell proliferation. In the eIF-3 complex, eif3d specifically recognizes and binds the 7-methylguanosine cap of a subset of mRNAs. This chain is Eukaryotic translation initiation factor 3 subunit D (eif3d), found in Dictyostelium discoideum (Social amoeba).